A 1135-amino-acid polypeptide reads, in one-letter code: Envelopment polyprotein (1135 aa).

Positions 1-18 (MIMWGLLLTMILIDFGAS) are cleaved as a signal peptide. Residues 19-495 (LRNVYDMKIE…ALLTTFCFGW (477 aa)) lie on the Lumenal side of the membrane. 11 disulfide bridges follow: cysteine 29–cysteine 151, cysteine 63–cysteine 157, cysteine 109–cysteine 128, cysteine 133–cysteine 138, cysteine 175–cysteine 185, cysteine 210–cysteine 247, cysteine 234–cysteine 351, cysteine 376–cysteine 435, cysteine 380–cysteine 389, cysteine 405–cysteine 424, and cysteine 452–cysteine 475. The N-linked (GlcNAc...) asparagine; by host glycan is linked to asparagine 134. Asparagine 235 and asparagine 347 each carry an N-linked (GlcNAc...) asparagine; by host glycan. A glycan (N-linked (GlcNAc...) asparagine; by host) is linked at asparagine 399. A helical transmembrane segment spans residues 496–516 (ILILSITLAVLVVLKFFAAIL). Residues 516 to 533 (LHNSSQENRFKIILRKIK) form a binding to the ribonucleoprotein region. The Cytoplasmic segment spans residues 517–627 (HNSSQENRFK…LNLFRYKSRC (111 aa)). 2 CCHC-type zinc fingers span residues 545 to 565 (CEVCKYECETGKELKAHNLSC) and 570 to 591 (CPYCFTHCEPTESAFQAHYKVC). Binding to the ribonucleoprotein stretches follow at residues 588–605 (YKVCQATHRFRDDLKKTI), 592–603 (QATHRFRDDLKK), and 611–625 (SPGCYRTLNLFRYKS). The ITAM domain occupies 611–634 (SPGCYRTLNLFRYKSRCYIFTVWV). Tyrosine 615 and tyrosine 628 each carry phosphotyrosine. The short motif at 615 to 618 (YRTL) is the YxxL element. A helical membrane pass occupies residues 628 to 648 (YIFTVWVTLLIIESIMWAASA). Over 649–1105 (SETVLEPSWN…EWITGIFNGN (457 aa)) the chain is Lumenal. Disulfide bonds link cysteine 735/cysteine 770, cysteine 739/cysteine 777, cysteine 751/cysteine 885, cysteine 765/cysteine 896, cysteine 780/cysteine 904, cysteine 806/cysteine 815, cysteine 823/cysteine 832, and cysteine 863/cysteine 867. Residues 757-777 (FEYENNWGCNPADCPGIGTGC) are fusion loop. N-linked (GlcNAc...) asparagine; by host glycosylation occurs at asparagine 928. Intrachain disulfides connect cysteine 970–cysteine 1000, cysteine 993–cysteine 1045, cysteine 1010–cysteine 1015, cysteine 1046–cysteine 1051, and cysteine 1085–cysteine 1089. The chain crosses the membrane as a helical span at residues 1106-1126 (WIVIVVLVFFFILSLILLSLL). Positions 1122–1135 (LLSLLCPIRKHKRS) are binding to the ribonucleoprotein. Over 1127 to 1135 (CPIRKHKRS) the chain is Cytoplasmic.

This sequence belongs to the hantavirus envelope glycoprotein family. Homodimer. Homotetramer; forms heterotetrameric Gn-Gc spikes in the pre-fusion conformation. Interacts (via C-terminus) with the nucleoprotein. Interacts with host TUFM; this interaction contributes to the virus-induced degradation of mitochondria by autophagy, which leads to degradation of host MAVS and inhibition of type I interferon (IFN) responses. Interacts with host MAP1LC3B; this interaction contributes to the virus-induced degradation of mitochondria by autophagy, which leads to degradation of host MAVS and inhibition of type I interferon (IFN) responses. As to quaternary structure, homodimer. Homotetramer; forms heterotetrameric Gn-Gc spikes in the pre-fusion conformation. Homotrimer; forms homotrimer in the post-fusion conformation at acidic pH. Interacts (via C-terminus) with the nucleoprotein. Envelope polyprotein precursor is quickly cleaved in vivo just after synthesis, presumably by host signal peptidase.

The protein resides in the virion membrane. It localises to the host cell surface. It is found in the host Golgi apparatus membrane. The protein localises to the host endoplasmic reticulum membrane. Its subcellular location is the host mitochondrion. Its function is as follows. Forms homotetramers with glycoprotein C at the surface of the virion. Attaches the virion to host cell receptors including integrin ITGAV/ITGB3. This attachment induces virion internalization predominantly through clathrin-dependent endocytosis. Mediates the assembly and budding of infectious virus particles through its interaction with the nucleocapsid protein and the viral genome. May dysregulate normal immune and endothelial cell responses through an ITAM motif. Translocates to mitochondria, binds to host TUFM and recruits MAP1LC3B. These interactions induce mitochondrial autophagy and therefore destruction of host MAVS leading to inhibition of type I interferon (IFN) responses. Concomitant breakdown of glycoprotein N is apparently prevented by the nucleoprotein that may inhibit Gn-stimulated autophagosome-lysosome fusion. Interacts with the viral genomic RNA. In terms of biological role, forms homotetramers with glycoprotein N at the surface of the virion. Attaches the virion to host cell receptors including integrin ITGAV/ITGB3. This attachment induces virion internalization predominantly through clathrin-dependent endocytosis. Class II fusion protein that promotes fusion of viral membrane with host endosomal membrane after endocytosis of the virion. The protein is Envelopment polyprotein (GP) of Dobrava-Belgrade orthohantavirus (DOBV).